Consider the following 512-residue polypeptide: Sucrose-6-phosphate hydrolase (512 aa).

Residues 40 to 43 (WMND), Gln-59, Trp-67, 102 to 103 (FS), 165 to 166 (RD), Glu-229, and Trp-311 each bind substrate. Asp-43 is a catalytic residue.

Belongs to the glycosyl hydrolase 32 family.

Its subcellular location is the cytoplasm. The enzyme catalyses Hydrolysis of terminal non-reducing beta-D-fructofuranoside residues in beta-D-fructofuranosides.. It participates in glycan biosynthesis; sucrose metabolism. The chain is Sucrose-6-phosphate hydrolase (sacA) from Zymomonas mobilis subsp. mobilis (strain ATCC 10988 / DSM 424 / LMG 404 / NCIMB 8938 / NRRL B-806 / ZM1).